The following is a 393-amino-acid chain: UPF0496 protein At2g18630 (393 aa).

Residues 1-20 (MMGGKSSKSKKNVEFGSPST) are disordered. The stretch at 149–222 (VNQFEEENED…RLRNIKTWRR (74 aa)) forms a coiled coil. 2 consecutive transmembrane segments (helical) span residues 226–246 (MVFV…AAVA) and 249–269 (PVVA…GKWC). A coiled-coil region spans residues 299-356 (KEMDNISILVRKVEVEIESLLKKAEFAITEEKEVRLAIDEIKKKLDVFTETIEELGEH).

Belongs to the UPF0496 family.

The protein resides in the membrane. The chain is UPF0496 protein At2g18630 from Arabidopsis thaliana (Mouse-ear cress).